The following is a 641-amino-acid chain: Leucine-rich repeat protein soc-2 homolog (641 aa).

The span at 1–19 (MNLCSSGATASTTSLSSTG) shows a compositional bias: low complexity. The disordered stretch occupies residues 1-146 (MNLCSSGATA…TTKKSKPIQA (146 aa)). Gly residues predominate over residues 24–56 (SGGGGVAGGGGISNGGGGGGGVTGSGGGGGGNT). The segment covering 96–106 (GAQQPSGSNGQ) has biased composition (low complexity). LRR repeat units follow at residues 161-182 (GIKR…VKDC), 184-205 (QITE…IGCL), 207-228 (NLRN…LQNC), 230-251 (QLKV…IYRL), 253-274 (SLTT…LRQL), 276-297 (NLTM…IGAL), 299-320 (NLTT…IGNC), 322-343 (NLSA…IGNL), 345-367 (SLVR…KNCK), 368-389 (CMDE…MLAS), 392-413 (GLTT…GPAQ), 416-437 (NVYS…IFSR), 440-461 (GLTK…IGTW), 463-484 (NMVE…IMNL), 486-507 (NLEI…IGNL), 509-530 (RLRI…IGLL), 532-553 (ELQR…IGHL), 555-576 (NLTH…IGSL), 578-600 (SLEN…LALC), and 602-623 (NLKY…IQAG).

Belongs to the SHOC2 family.

Its function is as follows. Acts as a Ras effector and participates in MAPK pathway activation. Probably acts as a regulatory subunit of protein phosphatase that specifically dephosphorylates Raf kinase and stimulate Raf activity at specialized signaling complexes upon Ras activation. In Drosophila ananassae (Fruit fly), this protein is Leucine-rich repeat protein soc-2 homolog (Sur-8).